The sequence spans 923 residues: RNA polymerase-associated protein RapA (923 aa).

Residues 162-332 (EVGNRVNPRV…FARLRLLDPE (171 aa)) enclose the Helicase ATP-binding domain. 175 to 182 (DEVGLGKT) lines the ATP pocket. Residues 278-281 (DEAH) carry the DEAH box motif. The Helicase C-terminal domain maps to 443-597 (KIDWLIDFLK…TCPMGMALFS (155 aa)).

Belongs to the SNF2/RAD54 helicase family. RapA subfamily. In terms of assembly, interacts with the RNAP. Has a higher affinity for the core RNAP than for the holoenzyme. Its ATPase activity is stimulated by binding to RNAP.

Its function is as follows. Transcription regulator that activates transcription by stimulating RNA polymerase (RNAP) recycling in case of stress conditions such as supercoiled DNA or high salt concentrations. Probably acts by releasing the RNAP, when it is trapped or immobilized on tightly supercoiled DNA. Does not activate transcription on linear DNA. Probably not involved in DNA repair. The protein is RNA polymerase-associated protein RapA of Haemophilus influenzae (strain ATCC 51907 / DSM 11121 / KW20 / Rd).